The primary structure comprises 663 residues: Rho GTPase-activating protein 18 (663 aa).

The segment at 15-37 (YHPSGKDQTVGNSHAKAGEEATS) is disordered. 2 positions are modified to phosphoserine: serine 66 and serine 69. The residue at position 158 (threonine 158) is a Phosphothreonine. Disordered stretches follow at residues 179-227 (RESK…PAPE) and 243-277 (QKESSKEKIQKSKGDDATLPSFRLPKDKTGTTRIG). 2 stretches are compositionally biased toward basic and acidic residues: residues 197–219 (NENKYQGRDDEASNLVGEEKLIP) and 245–258 (ESSKEKIQKSKGDD). Position 263 is a phosphoserine (serine 263). A Rho-GAP domain is found at 324-523 (VPLTALLEQD…LLIKYQKLLW (200 aa)). Serine 610 bears the Phosphoserine mark.

In terms of assembly, interacts with MPHOSPH6.

The protein localises to the cytoplasm. Its function is as follows. Rho GTPase activating protein that suppresses F-actin polymerization by inhibiting Rho. Rho GTPase activating proteins act by converting Rho-type GTPases to an inactive GDP-bound state. Plays a key role in tissue tension and 3D tissue shape by regulating cortical actomyosin network formation. Acts downstream of YAP1 and inhibits actin polymerization, which in turn reduces nuclear localization of YAP1. Regulates cell shape, spreading, and migration. This is Rho GTPase-activating protein 18 from Homo sapiens (Human).